Consider the following 527-residue polypeptide: Catalase (527 aa).

Positions 1-22 (MADSRDPASDQMKQWKEQRAPQ) are enriched in basic and acidic residues. The segment at 1-34 (MADSRDPASDQMKQWKEQRAPQKPDVLTTGGGNP) is disordered. Alanine 2 is subject to N-acetylalanine. Serine 9 is modified (phosphoserine). Residue lysine 13 is modified to N6-succinyllysine. Active-site residues include histidine 75 and asparagine 148. NADP(+) is bound by residues histidine 194, serine 201, arginine 203, and asparagine 213. At lysine 221 the chain carries N6-succinyllysine. Position 233 is an N6-acetyllysine (lysine 233). Positions 237, 303, 305, and 306 each coordinate NADP(+). Lysine 306 is subject to N6-acetyllysine; alternate. Lysine 306 bears the N6-succinyllysine; alternate mark. Heme is bound at residue tyrosine 358. 2 positions are modified to phosphoserine: serine 417 and serine 434. Lysine 449 and lysine 480 each carry N6-acetyllysine; alternate. Lysine 449 and lysine 480 each carry N6-succinyllysine; alternate. A Phosphothreonine modification is found at threonine 511. Serine 517 is subject to Phosphoserine. The residue at position 522 (lysine 522) is an N6-succinyllysine. The Microbody targeting signal; atypical motif lies at 524–527 (KANL).

It belongs to the catalase family. Homotetramer. Interacts (via microbody targeting signal) with PEX5, monomeric form interacts with PEX5, leading to its translocation into peroxisomes. It depends on heme as a cofactor. NADP(+) is required as a cofactor. In terms of tissue distribution, expressed in renal proximal tubules (at protein level).

It is found in the peroxisome matrix. The catalysed reaction is 2 H2O2 = O2 + 2 H2O. Functionally, catalyzes the degradation of hydrogen peroxide (H(2)O(2)) generated by peroxisomal oxidases to water and oxygen, thereby protecting cells from the toxic effects of hydrogen peroxide. Promotes growth of cells including T-cells, B-cells, myeloid leukemia cells, melanoma cells, mastocytoma cells and normal and transformed fibroblast cells. The sequence is that of Catalase (Cat) from Rattus norvegicus (Rat).